The sequence spans 386 residues: MTSPAPVSVSIDPVELAQALIRRPSVTPADAGAMDTLQRQLEALGFACRRMKFGEIENLYARRGTARPNLCFAGHTDVVPVGDDAAWTAGPFEAEIKEGVLYGRGAVDMKSAIAAFVAAVANVPDHPGSISFLITGDEEGVAEDGTVKVVEALAAEGEIIDHCIVGEPTSANLLGDMVKIGRRGSINAWITVEGRQGHVAYPHRAANPVPVLVDILSALKARVLDDGYTGFQPSNLEITTIDVGNTATNVIPAAAKARVNIRFNPAHKGKDLAAWIEGECAKAAEGFDGAATALCKISGEAFLTEPGDFTDVIVAAVTDATGRAPELSTTGGTSDARFIRALCPVVEFGLVGSTMHQVDERVPVEEVRQLAGAYEALIRRYFAAFA.

H75 is a Zn(2+) binding site. The active site involves D77. Residue D108 participates in Zn(2+) binding. Residue E138 is the Proton acceptor of the active site. Zn(2+)-binding residues include E139, E167, and H356.

Belongs to the peptidase M20A family. DapE subfamily. As to quaternary structure, homodimer. Zn(2+) serves as cofactor. Co(2+) is required as a cofactor.

The catalysed reaction is N-succinyl-(2S,6S)-2,6-diaminopimelate + H2O = (2S,6S)-2,6-diaminopimelate + succinate. It functions in the pathway amino-acid biosynthesis; L-lysine biosynthesis via DAP pathway; LL-2,6-diaminopimelate from (S)-tetrahydrodipicolinate (succinylase route): step 3/3. In terms of biological role, catalyzes the hydrolysis of N-succinyl-L,L-diaminopimelic acid (SDAP), forming succinate and LL-2,6-diaminopimelate (DAP), an intermediate involved in the bacterial biosynthesis of lysine and meso-diaminopimelic acid, an essential component of bacterial cell walls. This chain is Succinyl-diaminopimelate desuccinylase, found in Caulobacter vibrioides (strain ATCC 19089 / CIP 103742 / CB 15) (Caulobacter crescentus).